The chain runs to 336 residues: UPF0324 membrane protein lp_2841 (336 aa).

9 consecutive transmembrane segments (helical) span residues 5–22 (GILPGLVTSLVIAIISQG), 26–48 (FVPALGAATIAILLGIIGGNTFL), 84–106 (IGGFGVLFILCQMTITIVGALWL), 116–138 (VRMLMAGGNAVCGSSAIASIAPV), 150–172 (ITLVNLMGTVLMLTLPVLGMAVF), 204–226 (TVQFATIFKIMRIMMLVVVVLIF), 255–277 (WYVAGFLILCALNSLISLPAIIG), 282–304 (TISSWFEIIALAAIGLRLNLVNF), and 311–333 (LALYGLGVGTIQVVSALILITLL).

Belongs to the UPF0324 family.

It localises to the cell membrane. The polypeptide is UPF0324 membrane protein lp_2841 (Lactiplantibacillus plantarum (strain ATCC BAA-793 / NCIMB 8826 / WCFS1) (Lactobacillus plantarum)).